A 544-amino-acid chain; its full sequence is Chaperonin GroEL (544 aa).

Residues 29 to 32 (TLGP), 86 to 90 (DGTTT), glycine 413, 476 to 478 (NAA), and aspartate 492 each bind ATP.

This sequence belongs to the chaperonin (HSP60) family. As to quaternary structure, forms a cylinder of 14 subunits composed of two heptameric rings stacked back-to-back. Interacts with the co-chaperonin GroES.

The protein localises to the cytoplasm. It catalyses the reaction ATP + H2O + a folded polypeptide = ADP + phosphate + an unfolded polypeptide.. Functionally, together with its co-chaperonin GroES, plays an essential role in assisting protein folding. The GroEL-GroES system forms a nano-cage that allows encapsulation of the non-native substrate proteins and provides a physical environment optimized to promote and accelerate protein folding. This Bacillus velezensis (strain DSM 23117 / BGSC 10A6 / LMG 26770 / FZB42) (Bacillus amyloliquefaciens subsp. plantarum) protein is Chaperonin GroEL.